A 342-amino-acid chain; its full sequence is tRNA N6-adenosine threonylcarbamoyltransferase (342 aa).

Fe cation-binding residues include H115 and H119. Residues 137 to 141, D170, G183, D187, and N276 each bind substrate; that span reads IVSGG. A Fe cation-binding site is contributed by D304.

Belongs to the KAE1 / TsaD family. The cofactor is Fe(2+).

It is found in the cytoplasm. The catalysed reaction is L-threonylcarbamoyladenylate + adenosine(37) in tRNA = N(6)-L-threonylcarbamoyladenosine(37) in tRNA + AMP + H(+). In terms of biological role, required for the formation of a threonylcarbamoyl group on adenosine at position 37 (t(6)A37) in tRNAs that read codons beginning with adenine. Is involved in the transfer of the threonylcarbamoyl moiety of threonylcarbamoyl-AMP (TC-AMP) to the N6 group of A37, together with TsaE and TsaB. TsaD likely plays a direct catalytic role in this reaction. The sequence is that of tRNA N6-adenosine threonylcarbamoyltransferase from Staphylococcus saprophyticus subsp. saprophyticus (strain ATCC 15305 / DSM 20229 / NCIMB 8711 / NCTC 7292 / S-41).